Here is a 150-residue protein sequence, read N- to C-terminus: Putative esterase SSO1253 (150 aa).

This sequence belongs to the thioesterase PaaI family.

The sequence is that of Putative esterase SSO1253 from Saccharolobus solfataricus (strain ATCC 35092 / DSM 1617 / JCM 11322 / P2) (Sulfolobus solfataricus).